We begin with the raw amino-acid sequence, 486 residues long: ATP synthase subunit beta (486 aa).

Gly-164–Thr-171 serves as a coordination point for ATP.

Belongs to the ATPase alpha/beta chains family. In terms of assembly, F-type ATPases have 2 components, CF(1) - the catalytic core - and CF(0) - the membrane proton channel. CF(1) has five subunits: alpha(3), beta(3), gamma(1), delta(1), epsilon(1). CF(0) has four main subunits: a(1), b(1), b'(1) and c(9-12).

The protein resides in the cellular thylakoid membrane. It catalyses the reaction ATP + H2O + 4 H(+)(in) = ADP + phosphate + 5 H(+)(out). Its function is as follows. Produces ATP from ADP in the presence of a proton gradient across the membrane. The catalytic sites are hosted primarily by the beta subunits. The chain is ATP synthase subunit beta from Prochlorococcus marinus subsp. pastoris (strain CCMP1986 / NIES-2087 / MED4).